The primary structure comprises 328 residues: Ankyrin repeat domain-containing protein 2 (328 aa).

Phosphoserine is present on Ser-36. At Ser-68 the chain carries Phosphoserine; by PKB/AKT2. The interval 96–116 is disordered; sequence RDALAAAQEPPPEPEEITGPV. ANK repeat units lie at residues 116 to 145, 149 to 178, 182 to 211, 215 to 244, and 248 to 277; these read VNEETFLKAAVEGKMKVIDKYLADGGSADT, FRRTALHRASLEGHMEILEKLLENGATVDF, LDCTAMHWACRGGHLEVVRLLQSRGADTNV, LLSTPLHVAVRTGHVEIVEHFLSLGLDINA, and EGDSALHDAVRLNRYKIIKLLLLHGADMMA. Positions 297-328 are disordered; the sequence is RHALEHPEPESEQNGLERPGSGRETPQPIPAQ.

Interacts with ID3; both proteins cooperate in myoblast differentiation. Interacts with TTN/titin. Interacts (via ANK repeats) with TCAP; the interaction is direct. Interacts with TJP1 (via PDZ domains). Interacts with PML; the interaction is direct. Interacts with p53/TP53. Interacts with YBX1. Interacts with AKT2. In terms of processing, phosphorylation at Ser-68 by PKB/AKT2 in response to oxidative stress induces translocation to the nucleus and negatively regulates myoblast differentiation. In terms of tissue distribution, expressed by myoblasts (at protein level). Expressed in skeletal and cardiac muscles.

The protein localises to the cytoplasm. It localises to the myofibril. Its subcellular location is the sarcomere. The protein resides in the i band. It is found in the cytosol. The protein localises to the nucleus. It localises to the PML body. In terms of biological role, functions as a negative regulator of myocyte differentiation. May interact with both sarcoplasmic structural proteins and nuclear proteins to regulate gene expression during muscle development and in response to muscle stress. This chain is Ankyrin repeat domain-containing protein 2 (Ankrd2), found in Mus musculus (Mouse).